Reading from the N-terminus, the 256-residue chain is Hydroxyacylglutathione hydrolase (256 aa).

Residues His57, His59, Asp61, His62, His115, Asp134, and His172 each contribute to the Zn(2+) site.

This sequence belongs to the metallo-beta-lactamase superfamily. Glyoxalase II family. Monomer. Zn(2+) serves as cofactor.

It carries out the reaction an S-(2-hydroxyacyl)glutathione + H2O = a 2-hydroxy carboxylate + glutathione + H(+). Its pathway is secondary metabolite metabolism; methylglyoxal degradation; (R)-lactate from methylglyoxal: step 2/2. Functionally, thiolesterase that catalyzes the hydrolysis of S-D-lactoyl-glutathione to form glutathione and D-lactic acid. In Rhizobium meliloti (strain 1021) (Ensifer meliloti), this protein is Hydroxyacylglutathione hydrolase.